A 174-amino-acid polypeptide reads, in one-letter code: Major allergen Can f 1 (174 aa).

The N-terminal stretch at 1–18 (MKTLLLTIGFSLIAILQA) is a signal peptide. Cys-78 and Cys-169 are joined by a disulfide. N-linked (GlcNAc...) asparagine glycosylation is present at Asn-80.

This sequence belongs to the calycin superfamily. Lipocalin family. In terms of tissue distribution, tongue epithelial tissue.

The protein localises to the secreted. This is Major allergen Can f 1 from Canis lupus familiaris (Dog).